Here is a 314-residue protein sequence, read N- to C-terminus: Curved DNA-binding protein (314 aa).

The region spanning 5 to 69 (DYYKILDVEP…EKRAEYDELR (65 aa)) is the J domain. The disordered stretch occupies residues 73–92 (RQGRPFQTPPGWQSRAGAGA).

The protein localises to the cytoplasm. The protein resides in the nucleoid. In terms of biological role, DNA-binding protein that preferentially recognizes a curved DNA sequence. It is probably a functional analog of DnaJ; displays overlapping activities with DnaJ, but functions under different conditions, probably acting as a molecular chaperone in an adaptive response to environmental stresses other than heat shock. Lacks autonomous chaperone activity; binds native substrates and targets them for recognition by DnaK. Its activity is inhibited by the binding of CbpM. The protein is Curved DNA-binding protein of Pseudomonas syringae pv. tomato (strain ATCC BAA-871 / DC3000).